Here is a 125-residue protein sequence, read N- to C-terminus: Small ribosomal subunit protein uS17 (125 aa).

Disordered stretches follow at residues 1–21 (MSSSPAQRHTRKTQIGFVSSR) and 101–125 (VAAQVPTKTTASNTPAPAEQPAPQA).

Belongs to the universal ribosomal protein uS17 family. Part of the 30S ribosomal subunit.

Functionally, one of the primary rRNA binding proteins, it binds specifically to the 5'-end of 16S ribosomal RNA. This is Small ribosomal subunit protein uS17 from Opitutus terrae (strain DSM 11246 / JCM 15787 / PB90-1).